The following is a 430-amino-acid chain: GTPase Obg (430 aa).

Residues 1-158 form the Obg domain; sequence MFIDKAKIYL…LTVVLELKLI (158 aa). In terms of domain architecture, OBG-type G spans 159 to 330; the sequence is ADVGLVGFPN…LLSYVSKRLK (172 aa). GTP is bound by residues 165–172, 190–194, 212–215, 282–285, and 311–313; these read GFPNVGKS, FTTLT, DIPG, NKTD, and SAA. Ser-172 and Thr-192 together coordinate Mg(2+). An OCT domain is found at 351–430; sequence KYEETEDKYH…MYSVEFEYFN (80 aa).

Belongs to the TRAFAC class OBG-HflX-like GTPase superfamily. OBG GTPase family. In terms of assembly, monomer. The cofactor is Mg(2+).

It is found in the cytoplasm. In terms of biological role, an essential GTPase which binds GTP, GDP and possibly (p)ppGpp with moderate affinity, with high nucleotide exchange rates and a fairly low GTP hydrolysis rate. Plays a role in control of the cell cycle, stress response, ribosome biogenesis and in those bacteria that undergo differentiation, in morphogenesis control. In Alkaliphilus oremlandii (strain OhILAs) (Clostridium oremlandii (strain OhILAs)), this protein is GTPase Obg.